A 346-amino-acid chain; its full sequence is Small ribosomal subunit biogenesis GTPase RsgA (346 aa).

A disordered region spans residues 1–26; sequence MAKRKLTQNQTRRIQSNNAKTLHRHK. Residues 7–20 show a composition bias toward polar residues; the sequence is TQNQTRRIQSNNAK. Residues 103 to 271 enclose the CP-type G domain; it reads ENEISRPDYY…LIDSPGIREF (169 aa). Residues 159 to 162 and 213 to 221 contribute to the GTP site; these read NKVD and GQSGVGKSS. Zn(2+)-binding residues include Cys-295, Cys-300, His-302, and Cys-308.

Belongs to the TRAFAC class YlqF/YawG GTPase family. RsgA subfamily. As to quaternary structure, monomer. Associates with 30S ribosomal subunit, binds 16S rRNA. Zn(2+) is required as a cofactor.

The protein resides in the cytoplasm. Its function is as follows. One of several proteins that assist in the late maturation steps of the functional core of the 30S ribosomal subunit. Helps release RbfA from mature subunits. May play a role in the assembly of ribosomal proteins into the subunit. Circularly permuted GTPase that catalyzes slow GTP hydrolysis, GTPase activity is stimulated by the 30S ribosomal subunit. This is Small ribosomal subunit biogenesis GTPase RsgA from Haemophilus influenzae (strain PittGG).